The sequence spans 63 residues: DNA-directed RNA polymerase 7 kDa subunit (63 aa).

Belongs to the poxviridae DNA-directed RNA polymerase 7 kDa subunit family. As to quaternary structure, the DNA-dependent RNA polymerase used for intermediate and late genes expression consists of eight subunits 147 kDa, 133 kDa, 35 kDa, 30 kDa, 22 kDa, 19 kDa, 18 kDa and 7 kDa totalling more than 500 kDa in mass. The same holoenzyme, with the addition of the transcription-specificity factor RAP94, is used for early gene expression.

Its subcellular location is the virion. The catalysed reaction is RNA(n) + a ribonucleoside 5'-triphosphate = RNA(n+1) + diphosphate. Functionally, part of the DNA-dependent RNA polymerase which catalyzes the transcription of viral DNA into RNA using the four ribonucleoside triphosphates as substrates. Responsible for the transcription of early, intermediate and late genes. DNA-dependent RNA polymerase associates with the early transcription factor (ETF) thereby allowing the early genes transcription. Late transcription, and probably also intermediate transcription, require newly synthesized RNA polymerase. The chain is DNA-directed RNA polymerase 7 kDa subunit (RPO7) from Rabbit fibroma virus (strain Kasza) (RFV).